Consider the following 136-residue polypeptide: Small ribosomal subunit protein uS9 (136 aa).

The tract at residues 97-136 is disordered; sequence SPDNRKPLKTEGHLSRDPRAKERRKYGLKKARKAPQFSKR. Residues 98-116 are compositionally biased toward basic and acidic residues; the sequence is PDNRKPLKTEGHLSRDPRA. Basic residues predominate over residues 117-136; the sequence is KERRKYGLKKARKAPQFSKR.

The protein belongs to the universal ribosomal protein uS9 family.

The protein is Small ribosomal subunit protein uS9 of Prochlorococcus marinus (strain AS9601).